We begin with the raw amino-acid sequence, 332 residues long: Tetraacyldisaccharide 4'-kinase (332 aa).

ATP is bound at residue T58–T65.

It belongs to the LpxK family.

The catalysed reaction is a lipid A disaccharide + ATP = a lipid IVA + ADP + H(+). The protein operates within glycolipid biosynthesis; lipid IV(A) biosynthesis; lipid IV(A) from (3R)-3-hydroxytetradecanoyl-[acyl-carrier-protein] and UDP-N-acetyl-alpha-D-glucosamine: step 6/6. Functionally, transfers the gamma-phosphate of ATP to the 4'-position of a tetraacyldisaccharide 1-phosphate intermediate (termed DS-1-P) to form tetraacyldisaccharide 1,4'-bis-phosphate (lipid IVA). The chain is Tetraacyldisaccharide 4'-kinase from Shewanella piezotolerans (strain WP3 / JCM 13877).